A 588-amino-acid chain; its full sequence is Adenine deaminase (588 aa).

It belongs to the metallo-dependent hydrolases superfamily. Adenine deaminase family. Requires Mn(2+) as cofactor.

The catalysed reaction is adenine + H2O + H(+) = hypoxanthine + NH4(+). The chain is Adenine deaminase from Desulforamulus reducens (strain ATCC BAA-1160 / DSM 100696 / MI-1) (Desulfotomaculum reducens).